A 275-amino-acid polypeptide reads, in one-letter code: Large ribosomal subunit protein uL2 (275 aa).

The segment at 236–263 (EGRGKGQHPVTPWGMPTKGYKTRRGRRA) is disordered.

It belongs to the universal ribosomal protein uL2 family. Part of the 50S ribosomal subunit. Forms a bridge to the 30S subunit in the 70S ribosome.

Its function is as follows. One of the primary rRNA binding proteins. Required for association of the 30S and 50S subunits to form the 70S ribosome, for tRNA binding and peptide bond formation. It has been suggested to have peptidyltransferase activity; this is somewhat controversial. Makes several contacts with the 16S rRNA in the 70S ribosome. The protein is Large ribosomal subunit protein uL2 of Pseudothermotoga lettingae (strain ATCC BAA-301 / DSM 14385 / NBRC 107922 / TMO) (Thermotoga lettingae).